The sequence spans 151 residues: Deoxyuridine 5'-triphosphate nucleotidohydrolase (151 aa).

Residues R70–G72, N83, L87–D89, and M97 contribute to the substrate site.

It belongs to the dUTPase family. It depends on Mg(2+) as a cofactor.

The catalysed reaction is dUTP + H2O = dUMP + diphosphate + H(+). It functions in the pathway pyrimidine metabolism; dUMP biosynthesis; dUMP from dCTP (dUTP route): step 2/2. Functionally, this enzyme is involved in nucleotide metabolism: it produces dUMP, the immediate precursor of thymidine nucleotides and it decreases the intracellular concentration of dUTP so that uracil cannot be incorporated into DNA. The protein is Deoxyuridine 5'-triphosphate nucleotidohydrolase of Sodalis glossinidius (strain morsitans).